Consider the following 593-residue polypeptide: Ribonuclease Y (593 aa).

The chain crosses the membrane as a helical span at residues 6–26 (ILLMYLIVGLLTALTVLIFVF). Residues 218–278 (DPIKVKKVTD…IKLEVAYNAL (61 aa)) enclose the KH domain. The HD domain maps to 354 to 464 (VLTHSIEAAQ…TKIADFLSAA (111 aa)).

It belongs to the RNase Y family.

The protein localises to the cell membrane. In terms of biological role, endoribonuclease that initiates mRNA decay. The sequence is that of Ribonuclease Y from Mycoplasmoides gallisepticum (strain R(low / passage 15 / clone 2)) (Mycoplasma gallisepticum).